We begin with the raw amino-acid sequence, 770 residues long: Transducin-like enhancer protein 1 (770 aa).

The segment at 1-131 (MFPQSRHPTP…IIGQQQLQAQ (131 aa)) is q domain. Disordered regions lie at residues 128–157 (LQAQHLSHGHGPPVPLTPHPSGLQPPGIPP) and 176–346 (HLAI…PAME). The interval 132–199 (HLSHGHGPPV…RHRDRESGTS (68 aa)) is GP domain. Residues 146 to 157 (HPSGLQPPGIPP) are compositionally biased toward low complexity. Basic and acidic residues-rich tracts occupy residues 178-196 (AIKDDKKHHDAERHRDRES) and 209-244 (RSTDKRRNGPEFSSDIKKRKVDDKDNYDSDGDKSDD). Residues 200–266 (NSLLVPDSLR…SPHASPTHSP (67 aa)) are ccN domain. Residues 225 to 228 (KKRK) carry the Nuclear localization signal motif. Phosphoserine; by CK2 is present on S237. Positions 255 to 264 (PSSPHASPTH) are enriched in low complexity. A phosphoserine; by CDK1 mark is found at S257, S261, and S265. The span at 265–281 (SPRENGIDKNRLLKKDA) shows a compositional bias: basic and acidic residues. The interval 267 to 450 (RENGIDKNRL…GGKPAYSFHV (184 aa)) is SP domain. Residues 282-297 (SGSPASTASSGSSSSL) show a composition bias toward low complexity. Residue S284 is modified to Phosphoserine. The segment covering 298–308 (KSKEVSLHEKA) has biased composition (basic and acidic residues). WD repeat units lie at residues 470–501 (GIPRHARQINTLNHGEVVCAVTISNPTRHVYT), 528–558 (NRDNYIRSCKLLPDGCTLIVGGEASTLSIWD), 572–602 (SSAPACYALAISPDSKVCFSCCSDGNIAVWD), 614–644 (GHTDGASCIDISNDGTKLWTGGLDNTVRSWD), 696–726 (LHESCVLSLKFAYCGKWFVSTGKDNLLNAWR), and 737–767 (KESSSVLSCDISVDDKYIVTGSGDKKATVYE).

This sequence belongs to the WD repeat Groucho/TLE family. As to quaternary structure, homooligomer and heterooligomer with other family members. Binds RUNX1, RUNX3, FOXA2, KDM6A, UTY, histone H3, HESX1, ESRRG and the NF-kappa-B subunit RELA. Interacts with HES1 (via WRPW motif). Binds TCF7, LEF1, TCF7L1 and TCF7L2. Interacts with SIX3. Interacts with EFNB1. Interacts with TLE4. Interacts with FOXG1/BF-1; the interaction is inhibited by TLE6/GRG6. Post-translationally, phosphorylated, probably by CDK1. The degree of phosphorylation varies throughout the cell cycle, and is highest at the G2/M transition. Becomes hyperphosphorylated in response to cell differentiation and interaction with HES1 or RUNX1. In terms of processing, ubiquitinated by XIAP/BIRC4. As to expression, highly expressed in liver and lung. Detected at slightly lower levels in heart, brain, kidney and testis. Detected in fetal and adult stomach and small intestine, in adult ileum, duodenum and colon. Expressed in bone marrow-derived macrophages. Most abundant at the base of the crypts of Lieberkuhn in the small intestine.

It localises to the nucleus. Its subcellular location is the cytoplasm. Its function is as follows. Transcriptional corepressor that binds to a number of transcription factors. Inhibits NF-kappa-B-regulated gene expression. Inhibits the transcriptional activation mediated by FOXA2, and by CTNNB1 and TCF family members in Wnt signaling. Enhances FOXG1/BF-1- and HES1-mediated transcriptional repression. The effects of full-length TLE family members may be modulated by association with dominant-negative AES. Unusual function as coactivator for ESRRG. This chain is Transducin-like enhancer protein 1 (Tle1), found in Mus musculus (Mouse).